The chain runs to 141 residues: Large ribosomal subunit protein bL17 (141 aa).

Belongs to the bacterial ribosomal protein bL17 family. In terms of assembly, part of the 50S ribosomal subunit. Contacts protein L32.

The protein is Large ribosomal subunit protein bL17 of Sinorhizobium fredii (strain NBRC 101917 / NGR234).